Reading from the N-terminus, the 427-residue chain is Serine hydroxymethyltransferase (427 aa).

Residues Leu122 and 126 to 128 contribute to the (6S)-5,6,7,8-tetrahydrofolate site; that span reads GHL. Lys231 is subject to N6-(pyridoxal phosphate)lysine.

This sequence belongs to the SHMT family. As to quaternary structure, homodimer. Pyridoxal 5'-phosphate is required as a cofactor.

It is found in the cytoplasm. The catalysed reaction is (6R)-5,10-methylene-5,6,7,8-tetrahydrofolate + glycine + H2O = (6S)-5,6,7,8-tetrahydrofolate + L-serine. The protein operates within one-carbon metabolism; tetrahydrofolate interconversion. It functions in the pathway amino-acid biosynthesis; glycine biosynthesis; glycine from L-serine: step 1/1. Its function is as follows. Catalyzes the reversible interconversion of serine and glycine with tetrahydrofolate (THF) serving as the one-carbon carrier. This reaction serves as the major source of one-carbon groups required for the biosynthesis of purines, thymidylate, methionine, and other important biomolecules. Also exhibits THF-independent aldolase activity toward beta-hydroxyamino acids, producing glycine and aldehydes, via a retro-aldol mechanism. The chain is Serine hydroxymethyltransferase from Acidobacterium capsulatum (strain ATCC 51196 / DSM 11244 / BCRC 80197 / JCM 7670 / NBRC 15755 / NCIMB 13165 / 161).